The chain runs to 176 residues: Peroxynitrite isomerase 1 (176 aa).

The interval 1-23 (MDENSTLSPAHSDAAASSSANTP) is disordered. Residues 8–20 (SPAHSDAAASSSA) show a composition bias toward low complexity. Positions 37–43 (GLWRGEG) match the GXWXGXG motif. Residue His-168 coordinates heme b.

Belongs to the nitrobindin family. As to quaternary structure, homodimer. Heme b is required as a cofactor.

It catalyses the reaction peroxynitrite = nitrate. The protein operates within nitrogen metabolism. In terms of biological role, heme-binding protein able to scavenge peroxynitrite and to protect free L-tyrosine against peroxynitrite-mediated nitration, by acting as a peroxynitrite isomerase that converts peroxynitrite to nitrate. Therefore, this protein likely plays a role in peroxynitrite sensing and in the detoxification of reactive nitrogen and oxygen species (RNS and ROS, respectively). Is able to bind nitric oxide (NO) in vitro, but may act as a sensor of peroxynitrite levels in vivo. The chain is Peroxynitrite isomerase 1 from Rhodococcus jostii (strain RHA1).